The following is a 43-amino-acid chain: Photosystem I reaction center subunit IX (43 aa).

The helical transmembrane segment at 7–27 (YLSTAPVLATFWFGLLAGLLI) threads the bilayer.

It belongs to the PsaJ family.

Its subcellular location is the plastid. The protein localises to the chloroplast thylakoid membrane. Functionally, may help in the organization of the PsaE and PsaF subunits. The sequence is that of Photosystem I reaction center subunit IX from Gnetum parvifolium (Small-leaved jointfir).